The following is a 347-amino-acid chain: Holliday junction branch migration complex subunit RuvB (347 aa).

The tract at residues 1–182 is large ATPase domain (RuvB-L); that stretch reads MSAQNPVLTP…FGIPVRLSFY (182 aa). ATP-binding positions include Leu-21, Arg-22, Gly-63, Lys-66, Thr-67, Thr-68, 129–131, Arg-172, Tyr-182, and Arg-219; that span reads EDF. Residue Thr-67 coordinates Mg(2+). Positions 183–253 are small ATPAse domain (RuvB-S); the sequence is TVEELELIVR…IADEALTRLL (71 aa). A head domain (RuvB-H) region spans residues 256–347; sequence NMGLDQLDTR…QFRLTLEDDD (92 aa). DNA is bound by residues Arg-292, Arg-311, and Arg-316.

This sequence belongs to the RuvB family. In terms of assembly, homohexamer. Forms an RuvA(8)-RuvB(12)-Holliday junction (HJ) complex. HJ DNA is sandwiched between 2 RuvA tetramers; dsDNA enters through RuvA and exits via RuvB. An RuvB hexamer assembles on each DNA strand where it exits the tetramer. Each RuvB hexamer is contacted by two RuvA subunits (via domain III) on 2 adjacent RuvB subunits; this complex drives branch migration. In the full resolvosome a probable DNA-RuvA(4)-RuvB(12)-RuvC(2) complex forms which resolves the HJ.

The protein localises to the cytoplasm. It catalyses the reaction ATP + H2O = ADP + phosphate + H(+). The RuvA-RuvB-RuvC complex processes Holliday junction (HJ) DNA during genetic recombination and DNA repair, while the RuvA-RuvB complex plays an important role in the rescue of blocked DNA replication forks via replication fork reversal (RFR). RuvA specifically binds to HJ cruciform DNA, conferring on it an open structure. The RuvB hexamer acts as an ATP-dependent pump, pulling dsDNA into and through the RuvAB complex. RuvB forms 2 homohexamers on either side of HJ DNA bound by 1 or 2 RuvA tetramers; 4 subunits per hexamer contact DNA at a time. Coordinated motions by a converter formed by DNA-disengaged RuvB subunits stimulates ATP hydrolysis and nucleotide exchange. Immobilization of the converter enables RuvB to convert the ATP-contained energy into a lever motion, pulling 2 nucleotides of DNA out of the RuvA tetramer per ATP hydrolyzed, thus driving DNA branch migration. The RuvB motors rotate together with the DNA substrate, which together with the progressing nucleotide cycle form the mechanistic basis for DNA recombination by continuous HJ branch migration. Branch migration allows RuvC to scan DNA until it finds its consensus sequence, where it cleaves and resolves cruciform DNA. This chain is Holliday junction branch migration complex subunit RuvB, found in Allorhizobium ampelinum (strain ATCC BAA-846 / DSM 112012 / S4) (Agrobacterium vitis (strain S4)).